A 148-amino-acid chain; its full sequence is Large ribosomal subunit protein bL9 (148 aa).

This sequence belongs to the bacterial ribosomal protein bL9 family.

Its function is as follows. Binds to the 23S rRNA. The protein is Large ribosomal subunit protein bL9 of Pseudomonas putida (strain W619).